We begin with the raw amino-acid sequence, 60 residues long: UPF0391 membrane protein CCNA_00709 (60 aa).

The next 2 helical transmembrane spans lie at 4–24 (WAIILAIVALIAGALGFSGLA) and 33–53 (ILFFLFLVGFVLVLLLGGTVF).

This sequence belongs to the UPF0391 family.

The protein localises to the cell membrane. The sequence is that of UPF0391 membrane protein CCNA_00709 from Caulobacter vibrioides (strain NA1000 / CB15N) (Caulobacter crescentus).